The sequence spans 1013 residues: Poly [ADP-ribose] polymerase 1 (1013 aa).

Residue Ala-2 is modified to N-acetylalanine. The PARP-type 1 zinc-finger motif lies at 9–93 (YRVQYAKSGR…KVKKTAEAGG (85 aa)). The Zn(2+) site is built by Cys-21 and Cys-24. A Phosphoserine modification is found at Ser-41. 2 residues coordinate Zn(2+): His-53 and Cys-56. An N6-acetyllysine mark is found at Lys-97 and Lys-105. The segment at 113–203 (FAAEYAKSNR…ALKKQLPAIK (91 aa)) adopts a PARP-type 2 zinc-finger fold. Residues Cys-125 and Cys-128 each contribute to the Zn(2+) site. Lys-131 carries the N6-acetyllysine modification. Zn(2+)-binding residues include His-159 and Cys-162. Residues Ser-177, Ser-179, and Ser-185 each carry the phosphoserine modification. Lys-192 participates in a covalent cross-link: Glycyl lysine isopeptide (Lys-Gly) (interchain with G-Cter in SUMO2). The interval 200-226 (PAIKNEGKRKGDEVDGTDEVAKKKSRK) is disordered. Lys-203 is covalently cross-linked (Glycyl lysine isopeptide (Lys-Gly) (interchain with G-Cter in SUMO1); alternate). Lys-203 is covalently cross-linked (Glycyl lysine isopeptide (Lys-Gly) (interchain with G-Cter in SUMO2); alternate). Over residues 204-226 (NEGKRKGDEVDGTDEVAKKKSRK) the composition is skewed to basic and acidic residues. 2 consecutive short sequence motifs (nuclear localization signal) follow at residues 207-209 (KRK) and 221-226 (KKKSRK). The 135-residue stretch at 225–359 (RKETDKYSKL…VKKQDRIFPP (135 aa)) folds into the PADR1 zinc-binding domain. A Glycyl lysine isopeptide (Lys-Gly) (interchain with G-Cter in SUMO2) cross-link involves residue Lys-249. Phosphoserine occurs at positions 274 and 277. Positions 290 to 332 (GALLPCKECSGQLVFKSDAYYCTGDVTAWTKCMVKTQNPSRKE) are zinc ribbon. Zn(2+) contacts are provided by Cys-295, Cys-298, Cys-311, and Cys-321. Residues 373-523 (VTSAPTAVNS…GVNKSEKRMK (151 aa)) form an automodification domain region. The region spanning 385 to 476 (PADKPLSNMK…KSLQDLLSAH (92 aa)) is the BRCT domain. The residue at position 387 (Asp-387) is a PolyADP-ribosyl aspartic acid. Residues Glu-407, Glu-413, Glu-435, Glu-437, Glu-444, Glu-445, Glu-448, and Glu-456 each carry the polyADP-ribosyl glutamic acid modification. Residue Lys-467 forms a Glycyl lysine isopeptide (Lys-Gly) (interchain with G-Cter in SUMO2) linkage. A PolyADP-ribosyl glutamic acid modification is found at Glu-484. Residue Lys-486 forms a Glycyl lysine isopeptide (Lys-Gly) (interchain with G-Cter in SUMO1); alternate linkage. A Glycyl lysine isopeptide (Lys-Gly) (interchain with G-Cter in SUMO2); alternate cross-link involves residue Lys-486. Glu-488 and Glu-491 each carry polyADP-ribosyl glutamic acid. A disordered region spans residues 489-508 (PGEVVAPRGKSAAPSKKSKG). Residues 494 to 503 (APRGKSAAPS) are compositionally biased toward low complexity. Residues Ser-499, Ser-503, and Ser-506 each carry the ADP-ribosylserine modification. Lys-511 is covalently cross-linked (Glycyl lysine isopeptide (Lys-Gly) (interchain with G-Cter in SUMO2)). Residues Glu-512 and Glu-513 each carry the polyADP-ribosyl glutamic acid modification. Ser-518 bears the ADP-ribosylserine mark. Glu-519 is subject to PolyADP-ribosyl glutamic acid. Lys-520 carries the post-translational modification N6-(ADP-ribosyl)lysine. Residue Lys-527 forms a Glycyl lysine isopeptide (Lys-Gly) (interchain with G-Cter in SUMO2) linkage. One can recognise a WGR domain in the interval 541–637 (SAHVLEKGGK…KNFTKYPKKF (97 aa)). Position 593 is a phosphothreonine (Thr-593). Lys-599 and Lys-620 each carry N6-acetyllysine. Positions 661–778 (KSKLPKPVQE…DIEVAYSLLR (118 aa)) constitute a PARP alpha-helical domain. Lys-747 is covalently cross-linked (Glycyl lysine isopeptide (Lys-Gly) (interchain with G-Cter in SUMO1); alternate). Lys-747 is covalently cross-linked (Glycyl lysine isopeptide (Lys-Gly) (interchain with G-Cter in SUMO2); alternate). Phosphoserine occurs at positions 781 and 785. Residues 787–1013 (DPIDVNYEKL…LKFNFKTSLW (227 aa)) enclose the PARP catalytic domain. NAD(+) is bound by residues 861-863 (HGS), Gly-870, Arg-877, and Ser-903. Residue Glu-987 is the For poly [ADP-ribose] polymerase activity of the active site.

This sequence belongs to the ARTD/PARP family. Homodimer; PARP-type zinc-fingers from separate PARP1 molecules form a dimer module that specifically recognizes DNA strand breaks. Heterodimer; heterodimerizes with PARP2. Interacts (via the PARP catalytic domain) with HPF1. Interacts with NMNAT1. Interacts with nucleosomes; with a preference for nucleosomes containing H2A.X. Interacts with APTX. Component of a base excision repair (BER) complex, containing at least XRCC1, PARP1, PARP2, POLB and LRIG3. Interacts with SRY. The SWAP complex consists of NPM1, NCL, PARP1 and SWAP70. Interacts with TIAM2. Interacts with PARP3; leading to activate PARP1 in absence of DNA. Interacts (when poly-ADP-ribosylated) with CHD1L (via macro domain). Interacts with the DNA polymerase alpha catalytic subunit POLA1; this interaction functions as part of the control of replication fork progression. Interacts with EEF1A1 and TXK. Interacts with RNF4. Interacts with RNF146. Interacts with ZNF423. Interacts with APLF. Interacts with SNAI1 (via zinc fingers); the interaction requires SNAI1 to be poly-ADP-ribosylated and non-phosphorylated (active) by GSK3B. Interacts (when poly-ADP-ribosylated) with PARP9. Interacts with NR4A3; activates PARP1 by improving acetylation of PARP1 and suppressing the interaction between PARP1 and SIRT1. Interacts (via catalytic domain) with PUM3; the interaction inhibits the poly-ADP-ribosylation activity of PARP1 and the degradation of PARP1 by CASP3 following genotoxic stress. Interacts with ZNF365. Interacts with RRP1B. Interacts with TIMELESS; the interaction is direct. Interacts with CGAS; leading to impede the formation of the PARP1-TIMELESS complex. Interacts with KHDC3L, the interaction is increased following the formation of DNA double-strand breaks. Interacts (when auto-poly-ADP-ribosylated) with XRCC1; leading to inhibit PARP1 ADP-ribosyltransferase activity. Interacts with SPINDOC; promoting PARP1 ADP-ribosyltransferase activity. Interacts with BANF1; leading to inhibit PARP1 ADP-ribosyltransferase activity in response to oxidative DNA damage. Interacts (when sumoylated and ubiquitinated) with VCP/p97; leading to its extraction from chromatin. Interacts with YARS1; promoting PARP1 ADP-ribosyltransferase activity. Interacts with PACMP micropeptide; Interacts with PACMP micropeptide; interaction. Interacts (when poly-ADP-ribosylated) with isoform 1 of MACROH2A1; MACROH2A1 specifically binds to poly-ADP-ribose chains and inhibits PARP1 activity, limiting the consumption of nuclear NAD(+). Interacts with CARM1; promoting recruitment to replication forks. Interacts with RECQL. Interacts with ZNF32; the interaction reshapes ZNF432 interacting proteins. Interacts with TPRN; TPRN interacts with a number of DNA damage response proteins, is recruited to sites of DNA damage and may play a role in DNA damage repair. As to quaternary structure, interacts (when auto-poly-ADP-ribosylated) with AIFM1. Poly-ADP-ribosylated on serine, glutamate and aspartate residues by autocatalysis. Auto-ADP-ribosylation on serine takes place following interaction with HPF1. Auto poly-ADP-ribosylation on serine residues promotes its dissociation from chromatin. Poly-ADP-ribosylated by PARP2; poly-ADP-ribosylation mediates the recruitment of CHD1L to DNA damage sites. Mono-ADP-ribosylated at Lys-520 by SIRT6 in response to oxidative stress, promoting recruitment to double-strand breaks (DSBs) sites. Post-translationally, S-nitrosylated, leading to inhibit transcription regulation activity. In terms of processing, phosphorylated at Thr-593 by PRKDC in response to DNA damage following virus infection, promoting its translocation to the cytosol. Phosphorylated by TXK. Proteolytically cleaved by caspase-3 (CASP3) and caspase-7 (CASP7) in response to apoptosis to generate the Poly [ADP-ribose] polymerase 1, processed N-terminus and Poly [ADP-ribose] polymerase 1, processed C-terminus forms. Post-translationally, sumoylated with SUMO1 or SUMO2 by PIAS4 following prolonged residence (trapping) to chromatin. Sumoylation promotes ubiquitination by RNF4 and removal from chromatin by VCP/p97. In terms of processing, ubiquitinated by RNF4 following sumoylation by PIAS4 in response to prolonged residence (trapping) to chromatin. Ubiquitination promotes removal from chromatin by VCP/p97. As to expression, widely expressed. Expression is correlated with proliferation, with higher levels occurring during early fetal development and organogenesis and in the highly proliferative cell compartments of adult. Expressed in B-cells that have been induced to switch to various Ig isotypes.

It is found in the chromosome. The protein resides in the nucleus. The protein localises to the nucleolus. It localises to the cytoplasm. Its subcellular location is the cytosol. The enzyme catalyses NAD(+) + (ADP-D-ribosyl)n-acceptor = nicotinamide + (ADP-D-ribosyl)n+1-acceptor + H(+).. It catalyses the reaction L-seryl-[protein] + NAD(+) = O-(ADP-D-ribosyl)-L-seryl-[protein] + nicotinamide + H(+). It carries out the reaction L-aspartyl-[protein] + NAD(+) = 4-O-(ADP-D-ribosyl)-L-aspartyl-[protein] + nicotinamide. The catalysed reaction is L-glutamyl-[protein] + NAD(+) = 5-O-(ADP-D-ribosyl)-L-glutamyl-[protein] + nicotinamide. The enzyme catalyses L-tyrosyl-[protein] + NAD(+) = O-(ADP-D-ribosyl)-L-tyrosyl-[protein] + nicotinamide + H(+). It catalyses the reaction L-histidyl-[protein] + NAD(+) = N(tele)-(ADP-D-ribosyl)-L-histidyl-[protein] + nicotinamide + H(+). Its activity is regulated as follows. ADP-ribosyltransferase activity is regulated via an allosteric activation mechanism. In absence of activation signal, PARP1 is autoinhibited by the PARP alpha-helical domain (also named HD region), which prevents effective NAD(+)-binding. Activity is highly stimulated by signals, such as DNA strand breaks. Binding to damaged DNA unfolds the PARP alpha-helical domain, relieving autoinhibition. Poly-ADP-ribosyltransferase activity is tightly regulated and PARP1 is removed from damaged chromatin following initial poly-ADP-ribosylation of chromatin to avoid prolonged residence (trapping) that has cytotoxic consequences. A number of factors (VCP/p97) or post-translational modifications (auto-poly-ADP-ribosylation or ubiquitination) promote PARP1 removal from chromatin. Poly-ADP-ribosyltransferase that mediates poly-ADP-ribosylation of proteins and plays a key role in DNA repair. Mediates glutamate, aspartate, serine, histidine or tyrosine ADP-ribosylation of proteins: the ADP-D-ribosyl group of NAD(+) is transferred to the acceptor carboxyl group of target residues and further ADP-ribosyl groups are transferred to the 2'-position of the terminal adenosine moiety, building up a polymer with an average chain length of 20-30 units. Serine ADP-ribosylation of proteins constitutes the primary form of ADP-ribosylation of proteins in response to DNA damage. Specificity for the different amino acids is conferred by interacting factors, such as HPF1 and NMNAT1. Following interaction with HPF1, catalyzes serine ADP-ribosylation of target proteins; HPF1 confers serine specificity by completing the PARP1 active site. Also catalyzes tyrosine ADP-ribosylation of target proteins following interaction with HPF1. Following interaction with NMNAT1, catalyzes glutamate and aspartate ADP-ribosylation of target proteins; NMNAT1 confers glutamate and aspartate specificity. PARP1 initiates the repair of DNA breaks: recognizes and binds DNA breaks within chromatin and recruits HPF1, licensing serine ADP-ribosylation of target proteins, such as histones (H2BS6ADPr and H3S10ADPr), thereby promoting decompaction of chromatin and the recruitment of repair factors leading to the reparation of DNA strand breaks. HPF1 initiates serine ADP-ribosylation but restricts the polymerase activity of PARP1 in order to limit the length of poly-ADP-ribose chains. In addition to base excision repair (BER) pathway, also involved in double-strand breaks (DSBs) repair: together with TIMELESS, accumulates at DNA damage sites and promotes homologous recombination repair by mediating poly-ADP-ribosylation. Mediates the poly-ADP-ribosylation of a number of proteins, including itself, APLF, CHFR and NFAT5. In addition to proteins, also able to ADP-ribosylate DNA: catalyzes ADP-ribosylation of DNA strand break termini containing terminal phosphates and a 2'-OH group in single- and double-stranded DNA, respectively. Required for PARP9 and DTX3L recruitment to DNA damage sites. PARP1-dependent PARP9-DTX3L-mediated ubiquitination promotes the rapid and specific recruitment of 53BP1/TP53BP1, UIMC1/RAP80, and BRCA1 to DNA damage sites. PARP1-mediated DNA repair in neurons plays a role in sleep: senses DNA damage in neurons and promotes sleep, facilitating efficient DNA repair. In addition to DNA repair, also involved in other processes, such as transcription regulation, programmed cell death, membrane repair, adipogenesis and innate immunity. Acts as a repressor of transcription: binds to nucleosomes and modulates chromatin structure in a manner similar to histone H1, thereby altering RNA polymerase II. Acts both as a positive and negative regulator of transcription elongation, depending on the context. Acts as a positive regulator of transcription elongation by mediating poly-ADP-ribosylation of NELFE, preventing RNA-binding activity of NELFE and relieving transcription pausing. Acts as a negative regulator of transcription elongation in response to DNA damage by catalyzing poly-ADP-ribosylation of CCNT1, disrupting the phase separation activity of CCNT1 and subsequent activation of CDK9. Involved in replication fork progression following interaction with CARM1: mediates poly-ADP-ribosylation at replication forks, slowing fork progression. Poly-ADP-ribose chains generated by PARP1 also play a role in poly-ADP-ribose-dependent cell death, a process named parthanatos. Also acts as a negative regulator of the cGAS-STING pathway. Acts by mediating poly-ADP-ribosylation of CGAS: PARP1 translocates into the cytosol following phosphorylation by PRKDC and catalyzes poly-ADP-ribosylation and inactivation of CGAS. Acts as a negative regulator of adipogenesis: catalyzes poly-ADP-ribosylation of histone H2B on 'Glu-35' (H2BE35ADPr) following interaction with NMNAT1, inhibiting phosphorylation of H2B at 'Ser-36' (H2BS36ph), thereby blocking expression of pro-adipogenetic genes. Involved in the synthesis of ATP in the nucleus, together with NMNAT1, PARG and NUDT5. Nuclear ATP generation is required for extensive chromatin remodeling events that are energy-consuming. Its function is as follows. Promotes AIFM1-mediated apoptosis. This form, which translocates into the cytoplasm following cleavage by caspase-3 (CASP3) and caspase-7 (CASP7) in response to apoptosis, is auto-poly-ADP-ribosylated and serves as a poly-ADP-ribose carrier to induce AIFM1-mediated apoptosis. Functionally, this cleavage form irreversibly binds to DNA breaks and interferes with DNA repair, promoting DNA damage-induced apoptosis. This chain is Poly [ADP-ribose] polymerase 1 (Parp1), found in Mus musculus (Mouse).